Consider the following 227-residue polypeptide: CDP-diacylglycerol--inositol 3-phosphatidyltransferase 1 (227 aa).

2 helical membrane-spanning segments follow: residues 12-36 (LSVY…AFAV) and 42-61 (PLFS…DGWV). Positions 55 and 58 each coordinate Mg(2+). Positions 59, 63, and 69 each coordinate a CDP-1,2-diacyl-sn-glycerol. The next 4 membrane-spanning stretches (helical) occupy residues 73 to 95 (AVLD…SQIY), 101 to 122 (FLSL…TFLA), 142 to 165 (YGNR…LLLI), and 177 to 200 (VVAT…GWSM). 2 residues coordinate Mg(2+): Asp-76 and Asp-80. The active-site Proton acceptor is Asp-80.

The protein belongs to the CDP-alcohol phosphatidyltransferase class-I family. Mg(2+) serves as cofactor. It depends on Mn(2+) as a cofactor. In terms of tissue distribution, expressed in stems, flowers, shoots and roots. Present in epidermal tissues.

It is found in the membrane. It catalyses the reaction a CDP-1,2-diacyl-sn-glycerol + myo-inositol = a 1,2-diacyl-sn-glycero-3-phospho-(1D-myo-inositol) + CMP + H(+). Catalyzes the biosynthesis of phosphatidylinositol (PtdIns) as well as PtdIns:inositol exchange reaction. May thus act to reduce an excessive cellular PtdIns content. The exchange activity is due to the reverse reaction of PtdIns synthase and is dependent on CMP, which is tightly bound to the enzyme. In Arabidopsis thaliana (Mouse-ear cress), this protein is CDP-diacylglycerol--inositol 3-phosphatidyltransferase 1 (PIS1).